Consider the following 434-residue polypeptide: Chaperone SurA (434 aa).

The N-terminal stretch at 1–20 (MKNWRTLILGLVICANTAFA) is a signal peptide. 2 PpiC domains span residues 171 to 272 (DTEL…KVND) and 282 to 382 (VTEV…QLVD).

It is found in the periplasm. The catalysed reaction is [protein]-peptidylproline (omega=180) = [protein]-peptidylproline (omega=0). Its function is as follows. Chaperone involved in the correct folding and assembly of outer membrane proteins. Recognizes specific patterns of aromatic residues and the orientation of their side chains, which are found more frequently in integral outer membrane proteins. May act in both early periplasmic and late outer membrane-associated steps of protein maturation. The chain is Chaperone SurA from Yersinia pestis bv. Antiqua (strain Antiqua).